Consider the following 203-residue polypeptide: Proteasome subunit beta 2 (203 aa).

Positions 1-9 (MGEEVQIGA) are cleaved as a propeptide — removed in mature form; by autocatalysis. The active-site Nucleophile is Thr10.

This sequence belongs to the peptidase T1B family. In terms of assembly, the 20S proteasome core is composed of 14 alpha and 14 beta subunits that assemble into four stacked heptameric rings, resulting in a barrel-shaped structure. The two inner rings, each composed of seven catalytic beta subunits, are sandwiched by two outer rings, each composed of seven alpha subunits. The catalytic chamber with the active sites is on the inside of the barrel. Has a gated structure, the ends of the cylinder being occluded by the N-termini of the alpha-subunits. Is capped at one or both ends by the proteasome regulatory ATPase, PAN.

The protein resides in the cytoplasm. The enzyme catalyses Cleavage of peptide bonds with very broad specificity.. Its activity is regulated as follows. The formation of the proteasomal ATPase PAN-20S proteasome complex, via the docking of the C-termini of PAN into the intersubunit pockets in the alpha-rings, triggers opening of the gate for substrate entry. Interconversion between the open-gate and close-gate conformations leads to a dynamic regulation of the 20S proteasome proteolysis activity. Its function is as follows. Component of the proteasome core, a large protease complex with broad specificity involved in protein degradation. The protein is Proteasome subunit beta 2 of Pyrobaculum arsenaticum (strain DSM 13514 / JCM 11321 / PZ6).